The chain runs to 311 residues: tRNA-cytidine(32) 2-sulfurtransferase (311 aa).

A PP-loop motif motif is present at residues 47 to 52 (SGGKDS). Residues C122, C125, and C213 each coordinate [4Fe-4S] cluster.

It belongs to the TtcA family. In terms of assembly, homodimer. Mg(2+) serves as cofactor. The cofactor is [4Fe-4S] cluster.

Its subcellular location is the cytoplasm. The catalysed reaction is cytidine(32) in tRNA + S-sulfanyl-L-cysteinyl-[cysteine desulfurase] + AH2 + ATP = 2-thiocytidine(32) in tRNA + L-cysteinyl-[cysteine desulfurase] + A + AMP + diphosphate + H(+). The protein operates within tRNA modification. Catalyzes the ATP-dependent 2-thiolation of cytidine in position 32 of tRNA, to form 2-thiocytidine (s(2)C32). The sulfur atoms are provided by the cysteine/cysteine desulfurase (IscS) system. The chain is tRNA-cytidine(32) 2-sulfurtransferase from Escherichia coli O7:K1 (strain IAI39 / ExPEC).